The primary structure comprises 205 residues: Cell wall / vacuolar inhibitor of fructosidase 1 (205 aa).

The signal sequence occupies residues 1–23 (MKMMKVMMLIVMMMMVMVMVSEG). 2 disulfides stabilise this stretch: cysteine 30–cysteine 39 and cysteine 93–cysteine 134. Asparagine 139 and asparagine 156 each carry an N-linked (GlcNAc...) asparagine glycan.

It belongs to the PMEI family. As to expression, mostly expressed in roots, senescent leaves and flowers (in sepals), and, to a lower extent, in stems, specifically in the vascular tissues (e.g. in the phloem).

Its subcellular location is the vacuole. In terms of biological role, inhibits fructosidases from vacuoles (vacuolar invertase VI). The polypeptide is Cell wall / vacuolar inhibitor of fructosidase 1 (C/VIF1) (Arabidopsis thaliana (Mouse-ear cress)).